Here is a 90-residue protein sequence, read N- to C-terminus: Small ribosomal subunit protein bS16 (90 aa).

It belongs to the bacterial ribosomal protein bS16 family.

The polypeptide is Small ribosomal subunit protein bS16 (Anoxybacillus flavithermus (strain DSM 21510 / WK1)).